The chain runs to 334 residues: tRNA-dihydrouridine synthase B (334 aa).

Residues 16-18 and Gln70 contribute to the FMN site; that span reads PMA. The active-site Proton donor is Cys100. Residues Lys139, 200–202, and 224–225 contribute to the FMN site; these read NGD and GR.

It belongs to the Dus family. DusB subfamily. Requires FMN as cofactor.

The enzyme catalyses a 5,6-dihydrouridine in tRNA + NAD(+) = a uridine in tRNA + NADH + H(+). The catalysed reaction is a 5,6-dihydrouridine in tRNA + NADP(+) = a uridine in tRNA + NADPH + H(+). Its function is as follows. Catalyzes the synthesis of 5,6-dihydrouridine (D), a modified base found in the D-loop of most tRNAs, via the reduction of the C5-C6 double bond in target uridines. The sequence is that of tRNA-dihydrouridine synthase B from Serratia marcescens.